Consider the following 254-residue polypeptide: MDKGKSVKSTEKSVGIPPKTPKTDNNAHVDNEFLILQVNDAVFPIGSYTHSFGLETYIQQKKVTNKESALEYLKANLSSQFLYTEMLSLKLTYESTLQQNLKKILGVEEVIMLSTSPMELRLANQKLGNRFIKTLQAMNELDMGAFFNAYAQQTKDPTHATSYGVFAASLNMELKKALRHYLYAQTSNMVINCVKSVPLSQNDGQKILLSLQSPFNQLIEKTLELDESHLCAASVQNDIKAMQHESLYSRLYMS.

Residues 1–11 (MDKGKSVKSTE) show a composition bias toward basic and acidic residues. Positions 1–25 (MDKGKSVKSTEKSVGIPPKTPKTDN) are disordered.

Belongs to the UreF family. In terms of assembly, ureH, UreF and UreG form a complex that acts as a GTP-hydrolysis-dependent molecular chaperone, activating the urease apoprotein by helping to assemble the nickel containing metallocenter of UreC. The UreE protein probably delivers the nickel.

It localises to the cytoplasm. Its function is as follows. Required for maturation of urease via the functional incorporation of the urease nickel metallocenter. This chain is Urease accessory protein UreF, found in Helicobacter pylori (strain P12).